A 143-amino-acid polypeptide reads, in one-letter code: Cytochrome c-type biogenesis protein CcmE (143 aa).

At 1-8 the chain is on the cytoplasmic side; that stretch reads MTPVRRRK. A helical; Signal-anchor for type II membrane protein membrane pass occupies residues 9–29; the sequence is LFILLFALSVLSAAAALVLYA. The Periplasmic portion of the chain corresponds to 30–143; that stretch reads LRQNISLFYT…KSALADKVKQ (114 aa). Residues His-124 and Tyr-128 each contribute to the heme site.

It belongs to the CcmE/CycJ family.

It localises to the cell inner membrane. In terms of biological role, heme chaperone required for the biogenesis of c-type cytochromes. Transiently binds heme delivered by CcmC and transfers the heme to apo-cytochromes in a process facilitated by CcmF and CcmH. In Legionella pneumophila, this protein is Cytochrome c-type biogenesis protein CcmE.